Reading from the N-terminus, the 56-residue chain is Metallothionein (56 aa).

Residues cysteine 9, cysteine 11, cysteine 14, cysteine 16, cysteine 32, cysteine 36, histidine 40, cysteine 47, histidine 49, cysteine 52, and cysteine 54 each contribute to the Zn(2+) site.

It belongs to the metallothionein superfamily. Type 14 family.

Its function is as follows. May play a role in essential metal ion homeostasis (especially zinc homeostasis) and resistance to certain non-essential metal ions. Binds four zinc ions. This chain is Metallothionein (smtA), found in Synechococcus elongatus (strain ATCC 33912 / PCC 7942 / FACHB-805) (Anacystis nidulans R2).